Consider the following 358-residue polypeptide: Spermatogenesis-associated protein 22 (358 aa).

4 stretches are compositionally biased toward polar residues: residues 1–12 (MKRNLNESSARS), 30–51 (QPLT…DSYG), 81–121 (PASA…TSLR), and 150–159 (QQQKQFQTPE). 3 disordered regions span residues 1-51 (MKRN…DSYG), 81-122 (PASA…SLRT), and 150-172 (QQQK…AEVP).

Component of a multiprotein complex with MEIOB and RPA2. Interacts with MEIOB. Interacts with the complex BRME1:HSF2BP:BRCA2. In terms of tissue distribution, specifically expressed in gonadal germ cells, when male and female germ cells progress through prophase of meiosis I.

It localises to the chromosome. Functionally, meiosis-specific protein required for homologous recombination in meiosis I. The chain is Spermatogenesis-associated protein 22 from Mus musculus (Mouse).